A 239-amino-acid polypeptide reads, in one-letter code: Putative transcriptional regulator of 2-aminoethylphosphonate degradation operons (239 aa).

In terms of domain architecture, HTH gntR-type spans 8–76 (IPQYLLIKAQ…DRRGWFVTPE (69 aa)). A DNA-binding region (H-T-H motif) is located at residues 36–55 (ERELCAIFNTTRITIRESLA).

This Salmonella paratyphi A (strain ATCC 9150 / SARB42) protein is Putative transcriptional regulator of 2-aminoethylphosphonate degradation operons (phnR).